A 527-amino-acid polypeptide reads, in one-letter code: Transcriptional regulator ATRX (527 aa).

Residues 1-527 (GRSVVEFGDM…RSYKQKKKRR (527 aa)) form a disordered region. A compositionally biased stretch (polar residues) spans 14-23 (RQQSAVSSAG). Positions 27–46 (PSGKEENVHSPEDKRVTKSK) are enriched in basic and acidic residues. The segment covering 47 to 59 (EKSKHLRTRTGRK) has biased composition (basic residues). Residues 60–84 (VKSDVTDRFRKKEQSSESSEGEKKQ) are compositionally biased toward basic and acidic residues. 2 positions are modified to phosphoserine: S62 and S74. The span at 85–94 (GRQRTGTRGK) shows a compositional bias: basic residues. 4 stretches are compositionally biased toward basic and acidic residues: residues 95-122 (KSTDLKEEKVKREREYESSSDGTEKLPE), 136-145 (NKNDTTDEAK), 152-194 (DKSC…EKKQ), and 204-250 (KRPE…KEVK). K105 participates in a covalent cross-link: Glycyl lysine isopeptide (Lys-Gly) (interchain with G-Cter in SUMO2). Residues S112, S113, and S114 each carry the phosphoserine modification. At S162 the chain carries Phosphoserine. R184 bears the Citrulline mark. Residues 267–297 (KQKKQRMSAKKKNSNTKERKRKSLRATTTKR) show a composition bias toward basic residues. The tract at residues 290-427 (LRATTTKRKQ…SNQVNSESDS (138 aa)) is interaction with DAXX. S345, S346, and S354 each carry phosphoserine. Positions 368-382 (PENRIAKKMLLEEIK) are enriched in basic and acidic residues. A compositionally biased stretch (acidic residues) spans 387–398 (SDEDGSSDDEPK). Residues 399 to 410 (EGEKKRIGKQSE) are compositionally biased toward basic and acidic residues. Phosphoserine occurs at positions 423, 425, and 427. Residues 435–446 (PRYRHRLLRHKL) are compositionally biased toward basic residues. 2 positions are modified to phosphoserine: S449 and S453. Basic and acidic residues-rich tracts occupy residues 454-469 (GGEKKTKPKEHKETKG) and 509-518 (KKAELEENQR).

It belongs to the SNF2/RAD54 helicase family. As to quaternary structure, interacts with DAXX to form the chromatin remodeling complex ATRX:DAXX. Probably binds EZH2. Binds annexin V in a calcium and phosphatidylcholine/phosphatidylserine-dependent manner. Interacts directly with CBX5 via the PxVxL motif. Interacts with RAD50, MRE11 and NBN; indicative for an association with the MRN complex. Interacts with histone MACROH2A1. Interacts with histone H3 peptides methylated at 'Lys-10' with preferences H3K9me3 &gt; H3K9me2 &gt; H3K9me1. Interacts with histone H3 peptides unmethylated at 'Lys-5' (H3K4me0). Interacts with MECP2, SMC1 and SMC3. Interacts with SETDB1, TRIM28 and ZNF274. In terms of processing, citrullinated by PADI4.

It is found in the nucleus. It localises to the chromosome. The protein localises to the telomere. Its subcellular location is the PML body. The catalysed reaction is ATP + H2O = ADP + phosphate + H(+). In terms of biological role, involved in transcriptional regulation and chromatin remodeling. Facilitates DNA replication in multiple cellular environments and is required for efficient replication of a subset of genomic loci. Binds to DNA tandem repeat sequences in both telomeres and euchromatin and in vitro binds DNA quadruplex structures. May help stabilizing G-rich regions into regular chromatin structures by remodeling G4 DNA and incorporating H3.3-containing nucleosomes. Catalytic component of the chromatin remodeling complex ATRX:DAXX which has ATP-dependent DNA translocase activity and catalyzes the replication-independent deposition of histone H3.3 in pericentric DNA repeats outside S-phase and telomeres, and the in vitro remodeling of H3.3-containing nucleosomes. Its heterochromatin targeting is proposed to involve a combinatorial readout of histone H3 modifications (specifically methylation states of H3K9 and H3K4) and association with CBX5. Involved in maintaining telomere structural integrity in embryonic stem cells probably implying recruitment of CBX5 to telomeres. May be involved in transcriptional regulation of telomeric repeat-containing RNA (TERRA). Acts as a negative regulator of chromatin incorporation of transcriptionally repressive histone MACROH2A1, particularily at telomeres. Participates in the allele-specific gene expression at the imprinted IGF2/H19 gene locus. On the maternal allele, required for the chromatin occupancy of SMC1 and CTCTF within the H19 imprinting control region (ICR) and involved in esatblishment of histone tails modifications in the ICR. Binds to zinc-finger coding genes with atypical chromatin signatures and regulates its H3K9me3 levels. Forms a complex with ZNF274, TRIM28 and SETDB1 to facilitate the deposition and maintenance of H3K9me3 at the 3' exons of zinc-finger genes. The chain is Transcriptional regulator ATRX (Atrx) from Rattus norvegicus (Rat).